We begin with the raw amino-acid sequence, 224 residues long: Transcription cofactor HES-6 (224 aa).

The interval 1–31 is disordered; sequence MAPSQAPSRDRAGQEDEDRWEARGDRKARKP. Residues 8–25 show a composition bias toward basic and acidic residues; sequence SRDRAGQEDEDRWEARGD. The 53-residue stretch at 25–77 folds into the bHLH domain; the sequence is DRKARKPLVEKKRRARINESLQELRLLLAGTEVQAKLENAEVLELTVRRVQGA. In terms of domain architecture, Orange spans 96–129; that stretch reads FAAGYIQCMHEVHTFVSTCQAIDATVSAELLNHL. The tract at residues 146–209 is disordered; that stretch reads GDSLAGLPGG…GPDLVSTSLG (64 aa). Low complexity predominate over residues 158–171; sequence RSSWPPGGSPESPL. The span at 181 to 190 shows a compositional bias: acidic residues; sequence LCSDLEEIPE. The WRPW motif signature appears at 221–224; it reads WRPW.

In terms of assembly, transcription repression requires formation of a complex with a corepressor protein of the Groucho/TLE family. Interacts with HES1. Expressed in both undifferentiated and differentiated cells. High levels of expression are observed in several embryonic tissues including the nervous system, muscle and thymus. In the nervous system, initially expressed in the closing neural tube, then in the spinal cord, cranial and dorsal root ganglia, and brain neuroepithelium. Also expressed in epithelial cells of the embryonic respiratory, urinary and digestive systems. In the limb buds, expressed in skeletal muscle and presumptive tendons.

Its subcellular location is the nucleus. In terms of biological role, does not bind DNA itself but suppresses both HES1-mediated N box-dependent transcriptional repression and binding of HES1 to E box sequences. Also suppresses HES1-mediated inhibition of the heterodimer formed by ASCL1/MASH1 and TCF3/E47, allowing ASCL1 and TCF3 to up-regulate transcription in its presence. Promotes cell differentiation. The polypeptide is Transcription cofactor HES-6 (Mus musculus (Mouse)).